Here is a 179-residue protein sequence, read N- to C-terminus: Ribosome maturation factor RimM (179 aa).

Residues 102 to 179 (DGEYYWYQLE…EMKVDWDADF (78 aa)) enclose the PRC barrel domain.

It belongs to the RimM family. As to quaternary structure, binds ribosomal protein uS19.

The protein localises to the cytoplasm. In terms of biological role, an accessory protein needed during the final step in the assembly of 30S ribosomal subunit, possibly for assembly of the head region. Essential for efficient processing of 16S rRNA. May be needed both before and after RbfA during the maturation of 16S rRNA. It has affinity for free ribosomal 30S subunits but not for 70S ribosomes. The sequence is that of Ribosome maturation factor RimM from Pseudomonas savastanoi pv. phaseolicola (strain 1448A / Race 6) (Pseudomonas syringae pv. phaseolicola (strain 1448A / Race 6)).